We begin with the raw amino-acid sequence, 109 residues long: Small ribosomal subunit protein uS15c (109 aa).

The protein belongs to the universal ribosomal protein uS15 family. As to quaternary structure, part of the 30S ribosomal subunit.

It localises to the plastid. Its subcellular location is the chloroplast. The sequence is that of Small ribosomal subunit protein uS15c (rps15-A) from Trachelium caeruleum (Blue throatwort).